Here is a 460-residue protein sequence, read N- to C-terminus: Argininosuccinate lyase (460 aa).

The protein belongs to the lyase 1 family. Argininosuccinate lyase subfamily.

It localises to the cytoplasm. The enzyme catalyses 2-(N(omega)-L-arginino)succinate = fumarate + L-arginine. Its pathway is amino-acid biosynthesis; L-arginine biosynthesis; L-arginine from L-ornithine and carbamoyl phosphate: step 3/3. This chain is Argininosuccinate lyase, found in Leuconostoc mesenteroides subsp. mesenteroides (strain ATCC 8293 / DSM 20343 / BCRC 11652 / CCM 1803 / JCM 6124 / NCDO 523 / NBRC 100496 / NCIMB 8023 / NCTC 12954 / NRRL B-1118 / 37Y).